A 511-amino-acid chain; its full sequence is 2-methylbutanal oxime monooxygenase (511 aa).

Transmembrane regions (helical) follow at residues Pro-10–Phe-30 and Ile-304–Phe-324. Cys-451 contacts heme.

The protein belongs to the cytochrome P450 family. The cofactor is heme. As to expression, expressed in storage roots, primary roots, petioles and vascular tissues. Expressed in the outer cortex cells, the endodermis and around the xylem, phloem cells and laticifers.

It is found in the microsome membrane. The enzyme catalyses (1E,2S)-2-methylbutanal oxime + reduced [NADPH--hemoprotein reductase] + O2 = 2-hydroxy-2-methylbutanenitrile + oxidized [NADPH--hemoprotein reductase] + 2 H2O + H(+). The catalysed reaction is (E)-2-methylpropanal oxime + reduced [NADPH--hemoprotein reductase] + O2 = 2-hydroxy-2-methylpropanenitrile + oxidized [NADPH--hemoprotein reductase] + 2 H2O + H(+). In terms of biological role, catalyzes the conversion of (E)-2-methylpropanal oxime (valox) to 2-hydroxy-2-methylpropanenitrile (acetone cyanohydrin) and of (E)-2-methylbutanal oxime (ilox) to 2-hydroxy-2-methylbutyronitrile. The reaction takes place in three steps. First, the oxime is isomerized to the (Z)- isomer, next the (Z)-isomer is dehydrated to the corresponding nitrile, followed by a C-hydroxylation of the nitrile. Can use both aliphatic and aromatic oximes as substrates. The chain is 2-methylbutanal oxime monooxygenase (CYP71E7) from Manihot esculenta (Cassava).